The primary structure comprises 133 residues: MSWQAYVDEHLMCDIDGQGQQLAASAIVGHDGSVWAQSSSFPQLKPEEITGIMKDFDEPGHLAPTGLHLGGTKYMVIQGEAGAVIRGKKGSGGITIKKTGQALVFGIYEEPVTPGQCNMVVERLGDYLVEQGL.

Cys13 and Cys117 form a disulfide bridge. The Involved in PIP2 interaction signature appears at 83-99; sequence AVIRGKKGSGGITIKKT. A Phosphothreonine modification is found at Thr113.

This sequence belongs to the profilin family. In terms of assembly, occurs in many kinds of cells as a complex with monomeric actin in a 1:1 ratio. Phosphorylated by MAP kinases.

It localises to the cytoplasm. The protein localises to the cytoskeleton. In terms of biological role, binds to actin and affects the structure of the cytoskeleton. At high concentrations, profilin prevents the polymerization of actin, whereas it enhances it at low concentrations. This is Profilin-3 from Corylus avellana (European hazel).